The primary structure comprises 212 residues: Superoxide dismutase [Fe] 1, chloroplastic (212 aa).

Ala-2 is modified (N-acetylalanine). Fe cation-binding residues include His-35, His-87, Asp-169, and His-173.

It belongs to the iron/manganese superoxide dismutase family. As to quaternary structure, homodimer. Interacts with cpn20/cpn21. The cofactor is Fe cation.

It is found in the cell membrane. The protein localises to the plastid. Its subcellular location is the chloroplast membrane. The protein resides in the chloroplast stroma. It catalyses the reaction 2 superoxide + 2 H(+) = H2O2 + O2. With respect to regulation, activated by cpn20/cpn21. Destroys superoxide anion radicals which are normally produced within the cells and which are toxic to biological systems. This chain is Superoxide dismutase [Fe] 1, chloroplastic (FSD1), found in Arabidopsis thaliana (Mouse-ear cress).